We begin with the raw amino-acid sequence, 290 residues long: uncharacterized protein (290 aa).

It belongs to the glycosyltransferase 2 family.

This is an uncharacterized protein from Methanocaldococcus jannaschii (strain ATCC 43067 / DSM 2661 / JAL-1 / JCM 10045 / NBRC 100440) (Methanococcus jannaschii).